A 262-amino-acid polypeptide reads, in one-letter code: Indole-3-glycerol phosphate synthase (262 aa).

The protein belongs to the TrpC family.

The catalysed reaction is 1-(2-carboxyphenylamino)-1-deoxy-D-ribulose 5-phosphate + H(+) = (1S,2R)-1-C-(indol-3-yl)glycerol 3-phosphate + CO2 + H2O. Its pathway is amino-acid biosynthesis; L-tryptophan biosynthesis; L-tryptophan from chorismate: step 4/5. The chain is Indole-3-glycerol phosphate synthase from Bordetella pertussis (strain Tohama I / ATCC BAA-589 / NCTC 13251).